Consider the following 149-residue polypeptide: UPF0178 protein VC0395_A0405/VC395_0897 (149 aa).

The protein belongs to the UPF0178 family.

This Vibrio cholerae serotype O1 (strain ATCC 39541 / Classical Ogawa 395 / O395) protein is UPF0178 protein VC0395_A0405/VC395_0897.